The chain runs to 316 residues: Lipoyl synthase (316 aa).

Positions 66, 71, 77, 92, 96, 99, and 306 each coordinate [4Fe-4S] cluster. Residues 78-295 (YSQQTATFMV…ADIAKSMGFK (218 aa)) form the Radical SAM core domain.

It belongs to the radical SAM superfamily. Lipoyl synthase family. The cofactor is [4Fe-4S] cluster.

The protein resides in the cytoplasm. The catalysed reaction is [[Fe-S] cluster scaffold protein carrying a second [4Fe-4S](2+) cluster] + N(6)-octanoyl-L-lysyl-[protein] + 2 oxidized [2Fe-2S]-[ferredoxin] + 2 S-adenosyl-L-methionine + 4 H(+) = [[Fe-S] cluster scaffold protein] + N(6)-[(R)-dihydrolipoyl]-L-lysyl-[protein] + 4 Fe(3+) + 2 hydrogen sulfide + 2 5'-deoxyadenosine + 2 L-methionine + 2 reduced [2Fe-2S]-[ferredoxin]. It functions in the pathway protein modification; protein lipoylation via endogenous pathway; protein N(6)-(lipoyl)lysine from octanoyl-[acyl-carrier-protein]: step 2/2. In terms of biological role, catalyzes the radical-mediated insertion of two sulfur atoms into the C-6 and C-8 positions of the octanoyl moiety bound to the lipoyl domains of lipoate-dependent enzymes, thereby converting the octanoylated domains into lipoylated derivatives. The protein is Lipoyl synthase of Rhodopirellula baltica (strain DSM 10527 / NCIMB 13988 / SH1).